A 65-amino-acid chain; its full sequence is Large ribosomal subunit protein bL35 (65 aa).

The tract at residues 1-23 is disordered; that stretch reads MPKIKTNRGAAKRFKKTGTGKVK. Basic residues predominate over residues 10 to 23; it reads AAKRFKKTGTGKVK.

Belongs to the bacterial ribosomal protein bL35 family.

The chain is Large ribosomal subunit protein bL35 from Trichlorobacter lovleyi (strain ATCC BAA-1151 / DSM 17278 / SZ) (Geobacter lovleyi).